The primary structure comprises 210 residues: Putative odorant-binding protein A5 (210 aa).

A signal peptide spans 1–19 (MKLPALHLLFLGFICLARS).

Belongs to the phosphatidylethanolamine-binding protein family. As to expression, cells at the bases of a few scattered sensilla on the posterior surface of the antenna.

The protein localises to the secreted. The protein is Putative odorant-binding protein A5 (a5) of Drosophila melanogaster (Fruit fly).